The following is a 308-amino-acid chain: Ribosomal RNA small subunit methyltransferase H (308 aa).

Residues 32–34 (AGH), Asp-52, Phe-79, Asp-100, and Gln-107 contribute to the S-adenosyl-L-methionine site.

This sequence belongs to the methyltransferase superfamily. RsmH family.

It is found in the cytoplasm. The catalysed reaction is cytidine(1402) in 16S rRNA + S-adenosyl-L-methionine = N(4)-methylcytidine(1402) in 16S rRNA + S-adenosyl-L-homocysteine + H(+). Specifically methylates the N4 position of cytidine in position 1402 (C1402) of 16S rRNA. This chain is Ribosomal RNA small subunit methyltransferase H, found in Mycoplasma mycoides subsp. mycoides SC (strain CCUG 32753 / NCTC 10114 / PG1).